The following is a 351-amino-acid chain: Transaldolase (351 aa).

Lys-138 functions as the Schiff-base intermediate with substrate in the catalytic mechanism.

It belongs to the transaldolase family. Type 2 subfamily.

The protein resides in the cytoplasm. The enzyme catalyses D-sedoheptulose 7-phosphate + D-glyceraldehyde 3-phosphate = D-erythrose 4-phosphate + beta-D-fructose 6-phosphate. The protein operates within carbohydrate degradation; pentose phosphate pathway; D-glyceraldehyde 3-phosphate and beta-D-fructose 6-phosphate from D-ribose 5-phosphate and D-xylulose 5-phosphate (non-oxidative stage): step 2/3. Its function is as follows. Transaldolase is important for the balance of metabolites in the pentose-phosphate pathway. This chain is Transaldolase, found in Neisseria meningitidis serogroup C / serotype 2a (strain ATCC 700532 / DSM 15464 / FAM18).